Consider the following 514-residue polypeptide: Exoglucanase 1 (514 aa).

Residues 1 to 17 (MYQKLALISAFLATARA) form the signal peptide. The segment at 18 to 453 (QSACTLQAET…GSTGNSSGGN (436 aa)) is catalytic. 10 cysteine pairs are disulfide-bonded: Cys21–Cys89, Cys36–Cys42, Cys67–Cys88, Cys78–Cys84, Cys155–Cys414, Cys189–Cys227, Cys193–Cys226, Cys247–Cys273, Cys255–Cys260, and Cys278–Cys348. 2 N-linked (GlcNAc...) asparagine glycosylation sites follow: Asn62 and Asn81. The Nucleophile role is filled by Glu229. The active-site Proton donor is the Glu234. Residue Asn287 is glycosylated (N-linked (GlcNAc...) asparagine). Disordered regions lie at residues 401-427 (NETS…LESN) and 444-481 (GSTG…PTQT). Residues 454–478 (PPGGNPPGTTTTRRPATSTGSSPGP) form a linker region. A compositionally biased stretch (low complexity) spans 460-479 (PGTTTTRRPATSTGSSPGPT). The region spanning 478 to 514 (PTQTHYGQCGGIGYSGPTVCASGSTCQVLNPYYSQCL) is the CBM1 domain. 2 disulfide bridges follow: Cys486/Cys503 and Cys497/Cys513.

Belongs to the glycosyl hydrolase 7 (cellulase C) family.

It catalyses the reaction Hydrolysis of (1-&gt;4)-beta-D-glucosidic linkages in cellulose and cellotetraose, releasing cellobiose from the non-reducing ends of the chains.. The biological conversion of cellulose to glucose generally requires three types of hydrolytic enzymes: (1) Endoglucanases which cut internal beta-1,4-glucosidic bonds; (2) Exocellobiohydrolases that cut the disaccharide cellobiose from the non-reducing end of the cellulose polymer chain; (3) Beta-1,4-glucosidases which hydrolyze the cellobiose and other short cello-oligosaccharides to glucose. The sequence is that of Exoglucanase 1 (cbh1) from Hypocrea rufa (Trichoderma viride).